Consider the following 1000-residue polypeptide: C2 domain-containing protein 5 (1000 aa).

Residues 1 to 109 (MPGKLKVKIV…EAATVISGWF (109 aa)) form the C2 domain. The Ca(2+) site is built by aspartate 19, aspartate 26, aspartate 76, aspartate 78, serine 81, and aspartate 84. Residue serine 197 is modified to Phosphoserine; by PKB/AKT2. Residues serine 200 and serine 260 each carry the phosphoserine modification. Residues 265–330 (MKEIPFNEDP…SGSAGKEGGP (66 aa)) form a disordered region. Polar residues predominate over residues 274 to 289 (PNPNTHSSGPSTPLKN). The segment covering 290–318 (QTYSFSPSKSYSRQSSSSDTDLSLTPKTG) has biased composition (low complexity). 5 positions are modified to phosphoserine: serine 293, serine 295, serine 304, serine 305, and serine 306. Residue threonine 317 is modified to Phosphothreonine. Residues 319–328 (MGSGSAGKEG) show a composition bias toward gly residues. Serine 323 is modified (phosphoserine). Threonine 601 is subject to Phosphothreonine. The tract at residues 639-669 (EIIGSPIPEPRQRSRLLRSQSESSDEVTELD) is disordered. Phosphoserine occurs at positions 643, 657, 659, 661, and 662. Phosphothreonine is present on threonine 666. Position 671 is a phosphoserine (serine 671). Threonine 807 carries the phosphothreonine modification. Phosphoserine is present on residues serine 817 and serine 852.

Requires Ca(2+) as cofactor. In terms of processing, phosphorylated on Ser-197 by active myristoylated kinase AKT2; insulin-stimulated phosphorylation by AKT2 regulates SLC2A4/GLUT4 translocation into the plasma membrane.

It localises to the cytoplasmic vesicle membrane. The protein resides in the cytoplasm. Its subcellular location is the cell cortex. The protein localises to the cell membrane. It is found in the cell projection. It localises to the ruffle. Required for insulin-stimulated glucose transport and glucose transporter SLC2A4/GLUT4 translocation from intracellular glucose storage vesicle (GSV) to the plasma membrane (PM) in adipocytes. Binds phospholipid membranes in a calcium-dependent manner and is necessary for the optimal membrane fusion between SLC2A4/GLUT4 GSV and the PM. In Homo sapiens (Human), this protein is C2 domain-containing protein 5 (C2CD5).